We begin with the raw amino-acid sequence, 27 residues long: Peptide Cn29 (27 aa).

Cystine bridges form between cysteine 2–cysteine 23, cysteine 5–cysteine 18, and cysteine 12–cysteine 25.

As to expression, expressed by the venom gland.

Its subcellular location is the secreted. This Centruroides noxius (Mexican scorpion) protein is Peptide Cn29.